We begin with the raw amino-acid sequence, 614 residues long: DNA ligase (614 aa).

NAD(+) is bound by residues 29 to 33 (DQDYD) and 73 to 74 (SI). Lysine 111 acts as the N6-AMP-lysine intermediate in catalysis. Residues arginine 127, glutamate 158, and lysine 270 each contribute to the NAD(+) site. Positions 358, 361, 374, and 380 each coordinate Zn(2+). Positions 538–614 (TLTHELFDKK…MTETDYLSKI (77 aa)) constitute a BRCT domain.

This sequence belongs to the NAD-dependent DNA ligase family. LigA subfamily. Mg(2+) serves as cofactor. Mn(2+) is required as a cofactor.

The enzyme catalyses NAD(+) + (deoxyribonucleotide)n-3'-hydroxyl + 5'-phospho-(deoxyribonucleotide)m = (deoxyribonucleotide)n+m + AMP + beta-nicotinamide D-nucleotide.. In terms of biological role, DNA ligase that catalyzes the formation of phosphodiester linkages between 5'-phosphoryl and 3'-hydroxyl groups in double-stranded DNA using NAD as a coenzyme and as the energy source for the reaction. It is essential for DNA replication and repair of damaged DNA. The chain is DNA ligase from Ruthia magnifica subsp. Calyptogena magnifica.